A 97-amino-acid polypeptide reads, in one-letter code: Large ribosomal subunit protein uL23 (97 aa).

It belongs to the universal ribosomal protein uL23 family. In terms of assembly, part of the 50S ribosomal subunit. Contacts protein L29, and trigger factor when it is bound to the ribosome.

Its function is as follows. One of the early assembly proteins it binds 23S rRNA. One of the proteins that surrounds the polypeptide exit tunnel on the outside of the ribosome. Forms the main docking site for trigger factor binding to the ribosome. This Brucella canis (strain ATCC 23365 / NCTC 10854 / RM-666) protein is Large ribosomal subunit protein uL23.